A 99-amino-acid polypeptide reads, in one-letter code: UPF0235 protein AHA_3661 (99 aa).

The protein belongs to the UPF0235 family.

In Aeromonas hydrophila subsp. hydrophila (strain ATCC 7966 / DSM 30187 / BCRC 13018 / CCUG 14551 / JCM 1027 / KCTC 2358 / NCIMB 9240 / NCTC 8049), this protein is UPF0235 protein AHA_3661.